We begin with the raw amino-acid sequence, 96 residues long: uncharacterized protein (96 aa).

Over residues M1 to R18 the composition is skewed to basic and acidic residues. A disordered region spans residues M1–Q96. Positions Q28–T46 are enriched in polar residues. The span at T70–Q96 shows a compositional bias: basic and acidic residues.

This is an uncharacterized protein from Caenorhabditis elegans.